A 452-amino-acid chain; its full sequence is Nuclear distribution protein nudF 2 (452 aa).

The stretch at 76–101 (ALQILDLESKVAGLQAELSSLTLTSR) forms a coiled coil. WD repeat units follow at residues 123-164 (SHRD…RTLK), 166-206 (HIRA…ANIR), 210-250 (GHDH…CVKV), 253-292 (SSDA…QKSA), 295-355 (GHEN…IKTL), 357-396 (GHDN…KLVK), and 401-449 (AHSH…SCVR).

It belongs to the WD repeat LIS1/nudF family. In terms of assembly, self-associates. Interacts with nudE and dynein.

It localises to the cytoplasm. Its subcellular location is the cytoskeleton. It is found in the spindle pole. Positively regulates the activity of the minus-end directed microtubule motor protein dynein. May enhance dynein-mediated microtubule sliding by targeting dynein to the microtubule plus end. Required for nuclear migration during vegetative growth as well as development. Required for retrograde early endosome (EE) transport from the hyphal tip. Required for localization of dynein to the mitotic spindle poles. Recruits additional proteins to the dynein complex at SPBs. This chain is Nuclear distribution protein nudF 2, found in Talaromyces marneffei (strain ATCC 18224 / CBS 334.59 / QM 7333) (Penicillium marneffei).